The sequence spans 403 residues: Argininosuccinate synthase 1 (403 aa).

ATP-binding positions include 10–18 (SYSGGLDTS) and alanine 37. L-citrulline contacts are provided by tyrosine 88 and serine 93. Residue glycine 118 participates in ATP binding. L-aspartate is bound by residues threonine 120, asparagine 124, and aspartate 125. L-citrulline is bound at residue asparagine 124. L-citrulline-binding residues include arginine 128, serine 179, serine 188, glutamate 264, and tyrosine 276.

It belongs to the argininosuccinate synthase family. Type 1 subfamily. In terms of assembly, homotetramer.

Its subcellular location is the cytoplasm. It carries out the reaction L-citrulline + L-aspartate + ATP = 2-(N(omega)-L-arginino)succinate + AMP + diphosphate + H(+). It functions in the pathway amino-acid biosynthesis; L-arginine biosynthesis; L-arginine from L-ornithine and carbamoyl phosphate: step 2/3. The polypeptide is Argininosuccinate synthase 1 (Rhizobium johnstonii (strain DSM 114642 / LMG 32736 / 3841) (Rhizobium leguminosarum bv. viciae)).